A 634-amino-acid chain; its full sequence is Probable threonine--tRNA ligase, cytoplasmic (634 aa).

A TGS domain is found at 1–61 (MSIYVTFKGQ…NENQKIELYD (61 aa)).

This sequence belongs to the class-II aminoacyl-tRNA synthetase family.

Its subcellular location is the cytoplasm. The catalysed reaction is tRNA(Thr) + L-threonine + ATP = L-threonyl-tRNA(Thr) + AMP + diphosphate + H(+). In Enterocytozoon bieneusi (strain H348) (Microsporidian parasite), this protein is Probable threonine--tRNA ligase, cytoplasmic.